The primary structure comprises 235 residues: Urease accessory protein UreF (235 aa).

The protein belongs to the UreF family. As to quaternary structure, ureD, UreF and UreG form a complex that acts as a GTP-hydrolysis-dependent molecular chaperone, activating the urease apoprotein by helping to assemble the nickel containing metallocenter of UreC. The UreE protein probably delivers the nickel.

It is found in the cytoplasm. In terms of biological role, required for maturation of urease via the functional incorporation of the urease nickel metallocenter. This chain is Urease accessory protein UreF, found in Haemophilus influenzae (strain ATCC 51907 / DSM 11121 / KW20 / Rd).